A 555-amino-acid polypeptide reads, in one-letter code: High-affinity gluconate transporter ght3 (555 aa).

The Cytoplasmic segment spans residues Met1–Leu9. The helical transmembrane segment at Val10–Ile30 threads the bilayer. The Extracellular segment spans residues Leu31 to Gln58. A helical membrane pass occupies residues Ala59–Phe79. At Thr80 to Tyr87 the chain is on the cytoplasmic side. The helical transmembrane segment at Ser88 to Pro108 threads the bilayer. Topologically, residues Ser109–Gln112 are extracellular. A helical membrane pass occupies residues Val113–Gly133. Residues Tyr134–Arg144 are Cytoplasmic-facing. A helical membrane pass occupies residues Gly145–Ile165. Topologically, residues Asn166–Arg179 are extracellular. The chain crosses the membrane as a helical span at residues Thr180–Pro200. Over Glu201 to Thr266 the chain is Cytoplasmic. The chain crosses the membrane as a helical span at residues Cys267–Phe285. Topologically, residues Tyr286 to Phe301 are extracellular. A helical transmembrane segment spans residues Leu302–Ile322. Residues Asp323–Arg328 are Cytoplasmic-facing. A helical membrane pass occupies residues Asn329–Gly349. Residues Asp350–Arg363 lie on the Extracellular side of the membrane. The N-linked (GlcNAc...) asparagine glycan is linked to Asn357. The chain crosses the membrane as a helical span at residues Ala364–Gly384. The Cytoplasmic portion of the chain corresponds to Pro385–Ala404. The helical transmembrane segment at Ser405–Ile425 threads the bilayer. Residues Asn426–Lys432 are Extracellular-facing. Residues Leu433–Lys453 traverse the membrane as a helical segment. At Glu454–Ile555 the chain is on the cytoplasmic side. The span at Lys492 to Glu509 shows a compositional bias: basic and acidic residues. The interval Lys492 to Ile555 is disordered. Acidic residues predominate over residues Glu510–Asn521. Low complexity predominate over residues Asp522–Val534. The span at Arg545 to Ile555 shows a compositional bias: basic and acidic residues.

It belongs to the major facilitator superfamily. Sugar transporter (TC 2.A.1.1) family.

The protein localises to the membrane. Functionally, high-affinity gluconate transporter. The chain is High-affinity gluconate transporter ght3 (ght3) from Schizosaccharomyces pombe (strain 972 / ATCC 24843) (Fission yeast).